The following is a 129-amino-acid chain: Large-conductance mechanosensitive channel (129 aa).

Helical transmembrane passes span 8–28 (FIMR…AAFT), 30–50 (IVKS…AGAV), and 67–87 (GAVL…FLII).

Belongs to the MscL family. Homopentamer.

The protein resides in the cell membrane. In terms of biological role, channel that opens in response to stretch forces in the membrane lipid bilayer. May participate in the regulation of osmotic pressure changes within the cell. In Oenococcus oeni (strain ATCC BAA-331 / PSU-1), this protein is Large-conductance mechanosensitive channel.